A 138-amino-acid chain; its full sequence is Basic phospholipase A2 homolog CTs-K49a (138 aa).

The N-terminal stretch at 1 to 16 (MRTLWIMAVLLVVVEG) is a signal peptide. Disulfide bonds link Cys-42-Cys-131, Cys-44-Cys-60, Cys-59-Cys-111, Cys-65-Cys-138, Cys-66-Cys-104, and Cys-91-Cys-102. Residues 121–133 (KKKKINLKLFCKK) form an important for membrane-damaging activities in eukaryotes and bacteria; heparin-binding region.

It belongs to the phospholipase A2 family. Group II subfamily. K49 sub-subfamily. As to expression, expressed by the venom gland.

The protein localises to the secreted. In terms of biological role, snake venom phospholipase A2 homolog that lacks catalytic activity. It shows myotoxic and weak anticoagulant activities. A model of myotoxic mechanism has been proposed: an apo Lys49-PLA2 is activated by the entrance of a hydrophobic molecule (e.g. fatty acid) at the hydrophobic channel of the protein leading to a reorientation of a monomer. This reorientation causes a transition between 'inactive' to 'active' states, causing alignment of C-terminal and membrane-docking sites (MDoS) side-by-side and putting the membrane-disruption sites (MDiS) in the same plane, exposed to solvent and in a symmetric position for both monomers. The MDoS region stabilizes the toxin on membrane by the interaction of charged residues with phospholipid head groups. Subsequently, the MDiS region destabilizes the membrane with penetration of hydrophobic residues. This insertion causes a disorganization of the membrane, allowing an uncontrolled influx of ions (i.e. calcium and sodium), and eventually triggering irreversible intracellular alterations and cell death. The polypeptide is Basic phospholipase A2 homolog CTs-K49a (Trimeresurus stejnegeri (Chinese green tree viper)).